A 258-amino-acid polypeptide reads, in one-letter code: Transcription factor RSL3 (258 aa).

The short motif at arginine 98–asparagine 105 is the D-box element. Residues glutamate 119 to glutamine 178 form a disordered region. The segment covering serine 130–serine 152 has biased composition (polar residues). Residues threonine 173–arginine 186 form a basic motif region. The bHLH domain maps to threonine 173 to leucine 222. The interval glutamate 187 to leucine 222 is helix-loop-helix motif.

As to quaternary structure, homodimer. In terms of processing, ubiquitinated. Ubiquitination leads to its subsequent degradation by the 26S proteasome. In terms of tissue distribution, expressed constitutively in roots, leaves, and flowers. Expressed in root epidermal hair cells.

It is found in the nucleus. Transcription factor involved in the regulation of root hair elongation. Is sufficient to promote postmitotic cell growth in root-hair cells and is a direct transcriptional target of RHD6 and RSL1. Involved in the regulation of root hair elongation in response to low phosphate. Controls root hair cell growth by regulating the expression of genes encoding proteins involved in cell signaling, cell wall modification and secretion. The protein is Transcription factor RSL3 of Arabidopsis thaliana (Mouse-ear cress).